Here is a 505-residue protein sequence, read N- to C-terminus: Endoglucanase 5 (505 aa).

Residues 1–31 (MWMRRNQIVRKLTLGVVTTVLGMSLSFSALS) form the signal peptide. Residues 32-334 (ATPVETHGQL…REQIRAGANL (303 aa)) are catalytic. Residues His64, 68-69 (WF), Tyr95, and His130 contribute to the substrate site. Glu168 acts as the Proton donor in catalysis. Tyr230 is a binding site for substrate. Glu256 acts as the Nucleophile in catalysis. Substrate-binding positions include 262-263 (AS), Trp290, and 295-297 (KSE). The interval 332-355 (ANLGGGDTPTTPTEPTNPGNGTTG) is disordered. The segment at 335–352 (GGGDTPTTPTEPTNPGNG) is linker. Low complexity predominate over residues 339–355 (TPTTPTEPTNPGNGTTG). One can recognise a CBM3 domain in the interval 353-505 (TTGDVVLQYR…KGTLVWGVEP (153 aa)).

Belongs to the glycosyl hydrolase 5 (cellulase A) family.

Its subcellular location is the secreted. It carries out the reaction Endohydrolysis of (1-&gt;4)-beta-D-glucosidic linkages in cellulose, lichenin and cereal beta-D-glucans.. In terms of biological role, endoglucanase with some exoglucanase activity. This Pectobacterium carotovorum subsp. carotovorum (Erwinia carotovora subsp. carotovora) protein is Endoglucanase 5 (celV).